The primary structure comprises 217 residues: Putative thymidylate synthase (217 aa).

Residue cysteine 139 is part of the active site.

This sequence belongs to the thymidylate synthase family. Archaeal-type ThyA subfamily. Monomer.

It localises to the cytoplasm. The protein operates within pyrimidine metabolism; dTTP biosynthesis. Its function is as follows. May catalyze the biosynthesis of dTMP using an unknown cosubstrate. The protein is Putative thymidylate synthase of Methanosarcina mazei (strain ATCC BAA-159 / DSM 3647 / Goe1 / Go1 / JCM 11833 / OCM 88) (Methanosarcina frisia).